The primary structure comprises 261 residues: Cytochrome c oxidase subunit 3 (261 aa).

Topologically, residues 2 to 15 (THQTHAYHMVNPSP) are mitochondrial matrix. A helical transmembrane segment spans residues 16-34 (WPLTGALSALLLTSGLVMW). The Mitochondrial intermembrane portion of the chain corresponds to 35 to 40 (FHYNST). Residues 41–66 (ILLSLGLLTNILTMYQWWRDIIREGT) traverse the membrane as a helical segment. The Mitochondrial matrix segment spans residues 67-72 (YQGHHT). A helical transmembrane segment spans residues 73–105 (PIVQKGLRYGMILFIVSEVFFFAGFFWAFYHSS). The Mitochondrial intermembrane portion of the chain corresponds to 106-128 (LVPTHDLGGCWPPTGITPLNPLE). A helical membrane pass occupies residues 129 to 152 (VPLLNTSVLLASGVSITWAHHSLM). The Mitochondrial matrix segment spans residues 153 to 155 (EGN). The helical transmembrane segment at 156–183 (RNHMNQALLITILLGLYFTILQASEYFE) threads the bilayer. Residues 184–190 (TSFSISD) lie on the Mitochondrial intermembrane side of the membrane. Residues 191 to 223 (GIYGSTFFMATGFHGLHVIIGSTFLIVCLLRQL) traverse the membrane as a helical segment. The Mitochondrial matrix segment spans residues 224–232 (KFHFTSKHH). Residues 233–256 (FGFEAAAWYWHFVDVVWLFLYVSI) traverse the membrane as a helical segment. The Mitochondrial intermembrane segment spans residues 257-261 (YWWGS).

This sequence belongs to the cytochrome c oxidase subunit 3 family. In terms of assembly, component of the cytochrome c oxidase (complex IV, CIV), a multisubunit enzyme composed of 14 subunits. The complex is composed of a catalytic core of 3 subunits MT-CO1, MT-CO2 and MT-CO3, encoded in the mitochondrial DNA, and 11 supernumerary subunits COX4I, COX5A, COX5B, COX6A, COX6B, COX6C, COX7A, COX7B, COX7C, COX8 and NDUFA4, which are encoded in the nuclear genome. The complex exists as a monomer or a dimer and forms supercomplexes (SCs) in the inner mitochondrial membrane with NADH-ubiquinone oxidoreductase (complex I, CI) and ubiquinol-cytochrome c oxidoreductase (cytochrome b-c1 complex, complex III, CIII), resulting in different assemblies (supercomplex SCI(1)III(2)IV(1) and megacomplex MCI(2)III(2)IV(2)).

Its subcellular location is the mitochondrion inner membrane. The catalysed reaction is 4 Fe(II)-[cytochrome c] + O2 + 8 H(+)(in) = 4 Fe(III)-[cytochrome c] + 2 H2O + 4 H(+)(out). In terms of biological role, component of the cytochrome c oxidase, the last enzyme in the mitochondrial electron transport chain which drives oxidative phosphorylation. The respiratory chain contains 3 multisubunit complexes succinate dehydrogenase (complex II, CII), ubiquinol-cytochrome c oxidoreductase (cytochrome b-c1 complex, complex III, CIII) and cytochrome c oxidase (complex IV, CIV), that cooperate to transfer electrons derived from NADH and succinate to molecular oxygen, creating an electrochemical gradient over the inner membrane that drives transmembrane transport and the ATP synthase. Cytochrome c oxidase is the component of the respiratory chain that catalyzes the reduction of oxygen to water. Electrons originating from reduced cytochrome c in the intermembrane space (IMS) are transferred via the dinuclear copper A center (CU(A)) of subunit 2 and heme A of subunit 1 to the active site in subunit 1, a binuclear center (BNC) formed by heme A3 and copper B (CU(B)). The BNC reduces molecular oxygen to 2 water molecules using 4 electrons from cytochrome c in the IMS and 4 protons from the mitochondrial matrix. The chain is Cytochrome c oxidase subunit 3 from Rattus norvegicus (Rat).